A 391-amino-acid chain; its full sequence is Formate-dependent phosphoribosylglycinamide formyltransferase (391 aa).

Residues 18–19 and glutamate 78 contribute to the N(1)-(5-phospho-beta-D-ribosyl)glycinamide site; that span reads EL. ATP is bound by residues arginine 110, lysine 151, 156–161, 191–194, and glutamate 199; these read SSGKGQ and EEFI. The ATP-grasp domain occupies 115-305; sequence ELAAQQLGVR…EFELHLRAIL (191 aa). Mg(2+)-binding residues include glutamate 264 and glutamate 276. Residues aspartate 283, lysine 353, and 360–361 each bind N(1)-(5-phospho-beta-D-ribosyl)glycinamide; that span reads RR.

This sequence belongs to the PurK/PurT family. As to quaternary structure, homodimer.

The enzyme catalyses N(1)-(5-phospho-beta-D-ribosyl)glycinamide + formate + ATP = N(2)-formyl-N(1)-(5-phospho-beta-D-ribosyl)glycinamide + ADP + phosphate + H(+). It participates in purine metabolism; IMP biosynthesis via de novo pathway; N(2)-formyl-N(1)-(5-phospho-D-ribosyl)glycinamide from N(1)-(5-phospho-D-ribosyl)glycinamide (formate route): step 1/1. In terms of biological role, involved in the de novo purine biosynthesis. Catalyzes the transfer of formate to 5-phospho-ribosyl-glycinamide (GAR), producing 5-phospho-ribosyl-N-formylglycinamide (FGAR). Formate is provided by PurU via hydrolysis of 10-formyl-tetrahydrofolate. This is Formate-dependent phosphoribosylglycinamide formyltransferase from Synechocystis sp. (strain ATCC 27184 / PCC 6803 / Kazusa).